Reading from the N-terminus, the 600-residue chain is DNA mismatch repair protein MutL (600 aa).

Positions 327-405 (DGSRAATTGA…FSPQPAAAEP (79 aa)) are disordered. The span at 349-367 (PNSQRPQTAWSAETSSSRP) shows a compositional bias: polar residues.

The protein belongs to the DNA mismatch repair MutL/HexB family.

Its function is as follows. This protein is involved in the repair of mismatches in DNA. It is required for dam-dependent methyl-directed DNA mismatch repair. May act as a 'molecular matchmaker', a protein that promotes the formation of a stable complex between two or more DNA-binding proteins in an ATP-dependent manner without itself being part of a final effector complex. The protein is DNA mismatch repair protein MutL of Rhizobium johnstonii (strain DSM 114642 / LMG 32736 / 3841) (Rhizobium leguminosarum bv. viciae).